A 541-amino-acid polypeptide reads, in one-letter code: MGSSEVSIIPGLQKEEKAAVERRRLHVLKALKKLRIEADEAPVVAVLGSGGGLRAHIACLGVLSEMKEQGLLDAVTYLAGVSGSTWAISSLYTNDGDMEALEADLKHRFTRQEWDLAKSLQKTIQAARSENYSLTDFWAYMVISKQTRELPESHLSNMKKPVEEGTLPYPIFAAIDNDLQPSWQEARAPETWFEFTPHHAGFSALGAFVSITHFGSKFKKGRLVRTHPERDLTFLRGLWGSALGNTEVIREYIFDQLRNLTLKGLWRRAVANAKSIGHLIFARLLRLQESSQGEHPPPEDEGGEPEHTWLTEMLENWTRTSLEKQEQPHEDPERKGSLSNLMDFVKKTGICASKWEWGTTHNFLYKHGGIRDKIMSSRKHLHLVDAGLAINTPFPLVLPPTREVHLILSFDFSAGDPFETIRATTDYCRRHKIPFPQVEEAELDLWSKAPASCYILKGETGPVVMHFPLFNIDACGGDIEAWSDTYDTFKLADTYTLDVVVLLLALAKKNVRENKKKILRELMNVAGLYYPKDSARSCCLA.

Residues 1 to 541 (MGSSEVSIIP…KDSARSCCLA (541 aa)) form the PLA2c domain. Residue Ser-82 is the Nucleophile of the active site. Residues 260 to 292 (LTLKGLWRRAVANAKSIGHLIFARLLRLQESSQ) are required for lipid droplet localization. Ser-337 carries the phosphoserine modification. Asp-385 serves as the catalytic Proton acceptor. Cys-538 bears the Cysteine methyl ester mark. Residue Cys-538 is the site of S-farnesyl cysteine attachment. A propeptide spans 539–541 (CLA) (removed in mature form).

In terms of assembly, (Microbial infection) Interacts with HCV non-structural protein 4B/NS4B; this interaction likely initiates the recruitment of replication complexes to lipid droplets. As to expression, highly expressed in heart and skeletal muscle.

The protein resides in the cell membrane. The protein localises to the endoplasmic reticulum membrane. It localises to the mitochondrion membrane. Its subcellular location is the lipid droplet. The catalysed reaction is a 1,2-diacyl-sn-glycero-3-phosphocholine + H2O = a 1-acyl-sn-glycero-3-phosphocholine + a fatty acid + H(+). It catalyses the reaction a 1-O-alkyl-2-acyl-sn-glycero-3-phosphocholine + H2O = a 1-O-alkyl-sn-glycero-3-phosphocholine + a fatty acid + H(+). The enzyme catalyses 1,2-dihexadecanoyl-sn-glycero-3-phosphocholine + H2O = 1-hexadecanoyl-sn-glycero-3-phosphocholine + hexadecanoate + H(+). It carries out the reaction 1-hexadecanoyl-2-(9Z-octadecenoyl)-sn-glycero-3-phosphocholine + H2O = 1-hexadecanoyl-sn-glycero-3-phosphocholine + (9Z)-octadecenoate + H(+). The catalysed reaction is 1-hexadecanoyl-2-(9Z,12Z-octadecadienoyl)-sn-glycero-3-phosphocholine + H2O = (9Z,12Z)-octadecadienoate + 1-hexadecanoyl-sn-glycero-3-phosphocholine + H(+). It catalyses the reaction 1-hexadecanoyl-2-(5Z,8Z,11Z,14Z-eicosatetraenoyl)-sn-glycero-3-phosphocholine + H2O = 1-hexadecanoyl-sn-glycero-3-phosphocholine + (5Z,8Z,11Z,14Z)-eicosatetraenoate + H(+). The enzyme catalyses 1-O-hexadecyl-2-(5Z,8Z,11Z,14Z)-eicosatetraenoyl-sn-glycero-3-phosphocholine + H2O = 1-O-hexadecyl-sn-glycero-3-phosphocholine + (5Z,8Z,11Z,14Z)-eicosatetraenoate + H(+). It carries out the reaction 1-hexadecanoyl-2-(5Z,8Z,11Z,14Z-eicosatetraenoyl)-sn-glycero-3-phosphocholine + H2O = 2-(5Z,8Z,11Z,14Z)-eicosatetraenoyl-sn-glycero-3-phosphocholine + hexadecanoate + H(+). The catalysed reaction is a 1-acyl-sn-glycero-3-phosphocholine + H2O = sn-glycerol 3-phosphocholine + a fatty acid + H(+). It catalyses the reaction 1-hexadecanoyl-sn-glycero-3-phosphocholine + H2O = sn-glycerol 3-phosphocholine + hexadecanoate + H(+). The enzyme catalyses 2 1-hexadecanoyl-sn-glycero-3-phosphocholine = 1,2-dihexadecanoyl-sn-glycero-3-phosphocholine + sn-glycerol 3-phosphocholine. It carries out the reaction 1-hexadecanoyl-sn-glycero-3-phosphoethanolamine + 1-hexadecanoyl-sn-glycero-3-phosphocholine = 1,2-dihexadecanoyl-sn-glycero-3-phosphoethanolamine + sn-glycerol 3-phosphocholine. The catalysed reaction is 1-hexadecanoyl-sn-glycero-3-phosphoethanolamine + 1-hexadecanoyl-sn-glycero-3-phosphocholine = sn-glycero-3-phosphoethanolamine + 1,2-dihexadecanoyl-sn-glycero-3-phosphocholine. It catalyses the reaction 2 1-hexadecanoyl-sn-glycero-3-phosphoethanolamine = 1,2-dihexadecanoyl-sn-glycero-3-phosphoethanolamine + sn-glycero-3-phosphoethanolamine. The enzyme catalyses 1-O-hexadecyl-sn-glycero-3-phosphocholine + 1-hexadecanoyl-sn-glycero-3-phosphocholine = 1-O-hexadecyl-2-hexadecanoyl-sn-glycero-3-phosphocholine + sn-glycerol 3-phosphocholine. It carries out the reaction a 1-O-(1Z-alkenyl)-sn-glycero-3-phosphoethanolamine + 1-hexadecanoyl-sn-glycero-3-phosphocholine = 1-O-(1Z)-alkenyl-2-hexadecanoyl-sn-glycero-3-phosphoethanolamine + sn-glycerol 3-phosphocholine. The catalysed reaction is 1-O-hexadecyl-sn-glycero-3-phosphocholine + 1-hexadecanoyl-sn-glycero-3-phosphoethanolamine = 1-O-hexadecyl-2-hexadecanoyl-sn-glycero-3-phosphocholine + sn-glycero-3-phosphoethanolamine. It catalyses the reaction 1-octadecanoyl-2-(5Z,8Z,11Z,14Z)-eicosatetraenoyl-sn-glycero-3-phosphoethanolamine + 1-hexadecanoyl-sn-glycero-3-phosphocholine = 1-octadecanoyl-sn-glycero-3-phosphoethanolamine + 1-hexadecanoyl-2-(5Z,8Z,11Z,14Z-eicosatetraenoyl)-sn-glycero-3-phosphocholine. The enzyme catalyses 1-octadecanoyl-2-(5Z,8Z,11Z,14Z)-eicosatetraenoyl-sn-glycero-3-phosphoethanolamine + 1-O-hexadecyl-sn-glycero-3-phosphocholine = 1-octadecanoyl-sn-glycero-3-phosphoethanolamine + 1-O-hexadecyl-2-(5Z,8Z,11Z,14Z)-eicosatetraenoyl-sn-glycero-3-phosphocholine. It carries out the reaction 1-hexadecanoyl-2-(9Z,12Z-octadecadienoyl)-sn-glycero-3-phosphocholine + a 1-O-(1Z-alkenyl)-sn-glycero-3-phosphoethanolamine = 1-O-(1Z-alkenyl)-2-(9Z,12Z-octadecadienoyl)-sn-glycero-3-phosphoethanolamine + 1-hexadecanoyl-sn-glycero-3-phosphocholine. The catalysed reaction is 1-hexadecanoyl-2-(5Z,8Z,11Z,14Z-eicosatetraenoyl)-sn-glycero-3-phosphocholine + a 1-O-(1Z-alkenyl)-sn-glycero-3-phosphoethanolamine = 1-O-(1Z)-alkenyl-2-(5Z,8Z,11Z,14Z)-eicosatetraenoyl-sn-glycero-3-phosphoethanolamine + 1-hexadecanoyl-sn-glycero-3-phosphocholine. With respect to regulation, not regulated by calcium, coenzyme A or ATP. Lysophospholipase activity is inhibited by palmitoyl-CoA. Lysophospholipase and O-acyltransferase activities are inhibited by methylarachidonoylfluorophosphonate. Lysophospholipase activity is inhibited by phosphatidate or lysophosphatidate. O-acyltransferase activity is up-regulated at low concentration (10-20 uM) of phosphatidate or lysophosphatidate, but inhibited at higher concentrations. In terms of biological role, calcium-independent phospholipase, lysophospholipase and O-acyltransferase involved in phospholipid remodeling with implications in endoplasmic reticulum membrane homeostasis and lipid droplet biogenesis. Preferentially hydrolyzes the ester bond of the fatty acyl group attached at the sn-2 position of phospholipids with choline and ethanolamine head groups, producing lysophospholipids that are used in deacylation-reacylation cycles. Transfers the sn-1 fatty acyl from one lysophospholipid molecule to the sn-2 position of another lysophospholipid to form diacyl, alkylacyl and alkenylacyl glycerophospholipids. Cleaves ester bonds but not alkyl or alkenyl ether bonds at sn-1 position of lysophospholipids. Catalyzes sn-2 fatty acyl transfer from phospholipids to the sn-2 position of 1-O-alkyl or 1-O-alkenyl lysophospholipids with lower efficiency. In response to dietary fatty acids, may play a role in the formation of nascent lipid droplets from the endoplasmic reticulum likely by regulating the phospholipid composition of these organelles. (Microbial infection) May play a role in replication and assembly of human hepatitis C virus (HCV). In response to HCV infection, promotes remodeling of host endoplasmic reticulum membranes to form organelle-like structures called membranous web, where HCV replication occur. Can further mediate translocation of replication complexes to lipid droplets to enable virion assembly. Its function is as follows. (Microbial infection) May facilitate human T-lymphotropic virus type 1 (HTLV-1) infection by promoting leukotriene B4 (LTB4) biosynthesis. LTB4 acts as a chemoattractant for HTLV-1-infected CD4-positive T cells and favors cell to cell viral transmission. In Homo sapiens (Human), this protein is Cytosolic phospholipase A2 gamma (PLA2G4C).